Consider the following 834-residue polypeptide: Taste receptor type 1 member 2 (834 aa).

An N-terminal signal peptide occupies residues 1–19 (MEPRVRTVCFLFFLLRVLA). The Extracellular portion of the chain corresponds to 20 to 561 (EPAKNSDFYL…SFLEWHEAAT (542 aa)). Residues asparagine 84, asparagine 292, asparagine 312, asparagine 363, asparagine 423, asparagine 482, and asparagine 522 are each glycosylated (N-linked (GlcNAc...) asparagine). Residues 562–582 (IAVALLAALGFLSTLAILVIF) traverse the membrane as a helical segment. The Cytoplasmic segment spans residues 583-597 (WRHFETPMVRSAGGP). A helical transmembrane segment spans residues 598–618 (MCFLMLTLLLVAYMVVPVYVG). At 619 to 630 (LPKVSTCLCRQA) the chain is on the extracellular side. The helical transmembrane segment at 631–651 (LFPVCFTICISCIAVRSFQIV) threads the bilayer. The Cytoplasmic segment spans residues 652-676 (CVFKMASRFPRAYSYWVRYQGSYVS). Residues 677–697 (VAFITALKMVTVVISLLATGL) traverse the membrane as a helical segment. At 698 to 722 (NPTTRTDTDDPKIMIISCNPNYRNS) the chain is on the extracellular side. A helical membrane pass occupies residues 723-743 (LLFNTSLDLLLSVAGFSFAYM). The Cytoplasmic portion of the chain corresponds to 744–755 (GKELPTNYNEAK). Residues 756–776 (FITFSMTFYFTSSVSLCTFMS) traverse the membrane as a helical segment. Residues 777 to 779 (VYD) are Extracellular-facing. Residues 780–800 (GVLVTIVDLLVTVFNLLAISL) traverse the membrane as a helical segment. At 801-834 (GYFGPKCYMILFYPERNTPAYFNSMIQGYTMRRD) the chain is on the cytoplasmic side.

Belongs to the G-protein coupled receptor 3 family. TAS1R subfamily. In terms of assembly, forms heterodimers with TAS1R3.

It is found in the cell membrane. In terms of biological role, putative taste receptor. TAS1R2/TAS1R3 recognizes diverse natural and synthetic sweeteners. This is Taste receptor type 1 member 2 (TAS1R2) from Saimiri sciureus (Common squirrel monkey).